Reading from the N-terminus, the 357-residue chain is 2-oxoglutarate-dependent dioxygenase 11 (357 aa).

The 101-residue stretch at 207–307 (QPRGLRMAYY…RISAALFHYP (101 aa)) folds into the Fe2OG dioxygenase domain. Fe cation contacts are provided by His231, Asp233, and His288. Arg298 is a 2-oxoglutarate binding site.

The protein belongs to the iron/ascorbate-dependent oxidoreductase family. Fe(2+) serves as cofactor. Requires L-ascorbate as cofactor. In terms of tissue distribution, expressed in shoots.

The protein localises to the cytoplasm. It carries out the reaction melatonin + 2-oxoglutarate + O2 = 2-hydroxymelatonin + succinate + CO2. Functionally, involved in melatonin degradation. Catalyzes the hydroxylation of melatonin to produce 2-hydroxymelatonin. This chain is 2-oxoglutarate-dependent dioxygenase 11, found in Oryza sativa subsp. japonica (Rice).